Consider the following 41-residue polypeptide: Urotensin-1 (41 aa).

V41 is subject to Valine amide.

The protein belongs to the sauvagine/corticotropin-releasing factor/urotensin I family.

The protein resides in the secreted. In terms of biological role, urotensin is found in the teleost caudal neurosecretory system. It has a suggested role in osmoregulation and as a corticotropin-releasing factor. The sequence is that of Urotensin-1 from Catostomus commersonii (White sucker).